Reading from the N-terminus, the 167-residue chain is Low molecular mass early light-inducible protein HV60, chloroplastic (167 aa).

Residues 1–33 (MATMMAMSSFAGAAVLPRGSARSLPALGRRTLV) constitute a chloroplast transit peptide. 2 helical membrane passes run 101-121 (GQAW…VPLL) and 145-165 (FAMI…TPFI).

Belongs to the ELIP/psbS family.

Its subcellular location is the plastid. The protein localises to the chloroplast membrane. In terms of biological role, probably involved in the integration of pigments into the mature pigment-protein complexes. The chain is Low molecular mass early light-inducible protein HV60, chloroplastic from Hordeum vulgare (Barley).